The following is a 914-amino-acid chain: PHD finger protein 14 (914 aa).

A disordered region spans residues 19–276 (DALDYDSSDD…EDSLLERPQT (258 aa)). The span at 53–68 (ESAAGSESDSDAAAAS) shows a compositional bias: low complexity. Residues 90–102 (EKVKESFSEETSS) show a composition bias toward basic and acidic residues. Acidic residues-rich tracts occupy residues 155–168 (ELNE…EDDN) and 191–233 (GEED…DSEE). The PHD-type 1 zinc finger occupies 285 to 346 (ILICCVCLGD…PWFCDACKNG (62 aa)). The Zn(2+) site is built by C288, C291, C305, C308, H313, C316, C340, C343, C351, C354, H371, C374, C407, C410, C424, C429, H434, C437, C461, and H464. The C2HC pre-PHD-type zinc-finger motif lies at 348-381 (SPSCELCPSQDGIFKETDAGRWVHVVCALYVPGV). The segment at 405 to 465 (KECSLCEDTR…PFFAYCKQHA (61 aa)) adopts a PHD-type 2 zinc-finger fold. Residues 596 to 644 (MIQIQDNIVEQKNLKDKLESEQEKLHMEYDKLCESLEDLQNVNGQLRTE) are a coiled coil. The PHD-type 3 zinc-finger motif lies at 692–746 (LYSCGICKKNQDQHLLLLCDTCKLHYHLGCLDPPLTRMPKKTKNSYWQCSECDQA). Residues C695, C698, C710, C713, H718, C721, C740, and C743 each coordinate Zn(2+). Positions 777-838 (PQEMSPEPKK…PKADDTRTEC (62 aa)) are disordered. Positions 792–802 (TRTRGQKRKRM) are enriched in basic residues. Residues 803 to 817 (SICEEEKMEEPLPRE) are compositionally biased toward basic and acidic residues. The segment at 835–888 (RTECTTCKGPGDNENLVRCDECRLCYHFGCLDPPLKKSPKQTGYGWICQECDTS) adopts a PHD-type 4 zinc-finger fold. Zn(2+)-binding residues include C838, C841, C853, C856, H861, C864, C882, and C885. A disordered region spans residues 887 to 914 (TSSSKEEEAQEVEEESVNEETAEQEIPD). Residues 894–914 (EAQEVEEESVNEETAEQEIPD) are compositionally biased toward acidic residues.

In terms of assembly, interacts with histone H3.

The protein localises to the nucleus. Functionally, histone-binding protein. Binds preferentially to unmodified histone H3 but can also bind to a lesser extent to histone H3 trimethylated at 'Lys-9' (H3K9me3) as well as to histone H3 monomethylated at 'Lys-27' (H3K27ac) and trimethylated at 'Lys-27' (H3K27me3). Represses PDGFRA expression, thus playing a role in regulation of mesenchymal cell proliferation. In Danio rerio (Zebrafish), this protein is PHD finger protein 14.